The sequence spans 233 residues: MLTYDTWEEPAITFPEDDSYKGALSVLKWAYGHYGDQLVYACSFGIEGIVLIDLISKVKKDAEIVFLDTGLHFKETYETIEKVKERYPGLNIILKKPSLTLEEQAEAHGDKLWEREPNQCCYIRKILPLREALAGHPAWLSGLRRDQGPSRANTNFLNKDDKFQSIKVCPLIHWTWKDIWRYTSKHELDYNILHDQGYPSIGCEPCTSPAFTAEDLRSGRWNGMAKTECGLHE.

4 residues coordinate [4Fe-4S] cluster: Cys-120, Cys-121, Cys-203, and Cys-206. Cys-229 serves as the catalytic Nucleophile; cysteine thiosulfonate intermediate.

The protein belongs to the PAPS reductase family. CysH subfamily. Requires [4Fe-4S] cluster as cofactor.

The protein resides in the cytoplasm. It catalyses the reaction [thioredoxin]-disulfide + sulfite + AMP + 2 H(+) = adenosine 5'-phosphosulfate + [thioredoxin]-dithiol. It participates in sulfur metabolism; hydrogen sulfide biosynthesis; sulfite from sulfate. Its function is as follows. Catalyzes the formation of sulfite from adenosine 5'-phosphosulfate (APS) using thioredoxin as an electron donor. This Bacillus velezensis (strain DSM 23117 / BGSC 10A6 / LMG 26770 / FZB42) (Bacillus amyloliquefaciens subsp. plantarum) protein is Adenosine 5'-phosphosulfate reductase.